The chain runs to 326 residues: Glutaminase 2 (326 aa).

7 residues coordinate substrate: Ser73, Asn125, Glu169, Asn176, Tyr200, Tyr252, and Val270.

This sequence belongs to the glutaminase family. In terms of assembly, homotetramer.

It catalyses the reaction L-glutamine + H2O = L-glutamate + NH4(+). The sequence is that of Glutaminase 2 from Bacillus anthracis.